A 362-amino-acid polypeptide reads, in one-letter code: Cationic peroxidase SPC4 (362 aa).

An N-terminal signal peptide occupies residues 1 to 31; it reads MSRAPTLAAAAAVAAVVLICSSSTATAADGN. 4 disulfides stabilise this stretch: cysteine 50/cysteine 131, cysteine 83/cysteine 88, cysteine 138/cysteine 333, and cysteine 218/cysteine 245. Histidine 81 serves as the catalytic Proton acceptor. 5 residues coordinate Ca(2+): aspartate 82, valine 85, glycine 87, aspartate 89, and serine 91. An N-linked (GlcNAc...) asparagine glycan is attached at asparagine 109. Threonine 111 contributes to the (indol-3-yl)acetate binding site. Proline 181 serves as a coordination point for substrate. Histidine 211 contributes to the heme b binding site. Threonine 212 is a Ca(2+) binding site. A glycan (N-linked (GlcNAc...) asparagine) is linked at asparagine 234. 4 residues coordinate Ca(2+): aspartate 257, threonine 260, alanine 263, and aspartate 265. N-linked (GlcNAc...) asparagine glycosylation is present at asparagine 332.

This sequence belongs to the peroxidase family. Classical plant (class III) peroxidase subfamily. In terms of assembly, monomer. Requires heme b as cofactor. The cofactor is Ca(2+). In terms of processing, the proportions of glycoforms I and II are 35% and 65% respectively. In terms of tissue distribution, present in germinated and ungerminated grain, seedlings, and leaves and stem of the mature plant.

It localises to the secreted. The enzyme catalyses 2 a phenolic donor + H2O2 = 2 a phenolic radical donor + 2 H2O. Functionally, removal of H(2)O(2), oxidation of toxic reductants, biosynthesis and degradation of lignin, suberization, auxin catabolism, response to environmental stresses such as wounding, pathogen attack and oxidative stress. These functions might be dependent on each isozyme/isoform in each plant tissue. Has a high preference for hydroxycinnamates as substrates. Substrate preference is ferulic acid &gt; p-coumaric acid &gt; N-acetyl tyrosine methyl ester &gt; N-acetyl-tyrosine &gt; tyrosine &gt; catechol &gt; Gly-Tyr-Gly. May be involved in the formation of diferulate linkages in the plant cell wall. This is Cationic peroxidase SPC4 from Sorghum bicolor (Sorghum).